The primary structure comprises 385 residues: Probable tRNA sulfurtransferase (385 aa).

In terms of domain architecture, THUMP spans 57–160; the sequence is DGVIERVKKV…RGNAYVFTDK (104 aa). Residues 180 to 181, 205 to 206, Arg-262, Gly-284, and Gln-293 contribute to the ATP site; these read ML and YY.

The protein belongs to the ThiI family.

It is found in the cytoplasm. The enzyme catalyses [ThiI sulfur-carrier protein]-S-sulfanyl-L-cysteine + a uridine in tRNA + 2 reduced [2Fe-2S]-[ferredoxin] + ATP + H(+) = [ThiI sulfur-carrier protein]-L-cysteine + a 4-thiouridine in tRNA + 2 oxidized [2Fe-2S]-[ferredoxin] + AMP + diphosphate. It catalyses the reaction [ThiS sulfur-carrier protein]-C-terminal Gly-Gly-AMP + S-sulfanyl-L-cysteinyl-[cysteine desulfurase] + AH2 = [ThiS sulfur-carrier protein]-C-terminal-Gly-aminoethanethioate + L-cysteinyl-[cysteine desulfurase] + A + AMP + 2 H(+). It participates in cofactor biosynthesis; thiamine diphosphate biosynthesis. In terms of biological role, catalyzes the ATP-dependent transfer of a sulfur to tRNA to produce 4-thiouridine in position 8 of tRNAs, which functions as a near-UV photosensor. Also catalyzes the transfer of sulfur to the sulfur carrier protein ThiS, forming ThiS-thiocarboxylate. This is a step in the synthesis of thiazole, in the thiamine biosynthesis pathway. The sulfur is donated as persulfide by IscS. This Clostridium perfringens (strain ATCC 13124 / DSM 756 / JCM 1290 / NCIMB 6125 / NCTC 8237 / Type A) protein is Probable tRNA sulfurtransferase.